Consider the following 597-residue polypeptide: DNA mismatch repair protein MutL (597 aa).

Belongs to the DNA mismatch repair MutL/HexB family.

Functionally, this protein is involved in the repair of mismatches in DNA. It is required for dam-dependent methyl-directed DNA mismatch repair. May act as a 'molecular matchmaker', a protein that promotes the formation of a stable complex between two or more DNA-binding proteins in an ATP-dependent manner without itself being part of a final effector complex. This chain is DNA mismatch repair protein MutL, found in Rhodopseudomonas palustris (strain BisB5).